Consider the following 228-residue polypeptide: 7-cyano-7-deazaguanine synthase (228 aa).

Residue 10–20 participates in ATP binding; sequence FSGGQDSTTLA. Positions 190, 205, 208, and 211 each coordinate Zn(2+).

This sequence belongs to the QueC family. It depends on Zn(2+) as a cofactor.

The catalysed reaction is 7-carboxy-7-deazaguanine + NH4(+) + ATP = 7-cyano-7-deazaguanine + ADP + phosphate + H2O + H(+). Its pathway is purine metabolism; 7-cyano-7-deazaguanine biosynthesis. In terms of biological role, catalyzes the ATP-dependent conversion of 7-carboxy-7-deazaguanine (CDG) to 7-cyano-7-deazaguanine (preQ(0)). The sequence is that of 7-cyano-7-deazaguanine synthase from Helicobacter pylori (strain P12).